A 119-amino-acid polypeptide reads, in one-letter code: Large ribosomal subunit protein bL20 (119 aa).

It belongs to the bacterial ribosomal protein bL20 family.

Its function is as follows. Binds directly to 23S ribosomal RNA and is necessary for the in vitro assembly process of the 50S ribosomal subunit. It is not involved in the protein synthesizing functions of that subunit. The protein is Large ribosomal subunit protein bL20 of Streptococcus mutans serotype c (strain ATCC 700610 / UA159).